The chain runs to 258 residues: MSSSRDEFVYMAKLAEQAERYEEMVDFMEKVVTAADGGEELTIEERNLLSVAYKNVIGARRASWRIISSIEQKEESRGNEDHVTSIKTYRSKIESELTSICNGILKLLDSNLIRAASTGDSKVFYLKMKGDYHRYLAEFKTGAERKEAAENTLSSYKSAQDIANAELAPTHPIRLGLALNFSVFYYEILNSPDRACNLAKQAFDEAIAELDTLGEESYKDSTLIMQLLRDNLTLWTSDMQDEGTEEMKEVAKPDNEEH.

It belongs to the 14-3-3 family.

In Nicotiana tabacum (Common tobacco), this protein is 14-3-3-like protein F.